Reading from the N-terminus, the 344-residue chain is Beta-1,4-galactosyltransferase 4 (344 aa).

Topologically, residues 1–12 are cytoplasmic; it reads MGFNLTFHLSYK. A helical; Signal-anchor for type II membrane protein membrane pass occupies residues 13–38; that stretch reads FRLLLLLTLCLTVVGWATSNYFVGAI. The Lumenal portion of the chain corresponds to 39–344; sequence QEIPKAKEFM…NITVDFWFGA (306 aa). Cysteines 77 and 118 form a disulfide. UDP-alpha-D-galactose is bound by residues 129–133, 168–170, and 195–196; these read PHRNR, FNR, and VD. C189 and C208 form a disulfide bridge. D196 provides a ligand contact to Mn(2+). A glycan (N-linked (GlcNAc...) asparagine) is linked at N220. UDP-alpha-D-galactose contacts are provided by Y224 and W256. Position 258–261 (258–261) interacts with N-acetyl-D-glucosamine; sequence GEDD. H289 is a binding site for Mn(2+). 289-291 contributes to the UDP-alpha-D-galactose binding site; it reads HTR. Residue R301 participates in N-acetyl-D-glucosamine binding. N335 carries an N-linked (GlcNAc...) asparagine glycan.

It belongs to the glycosyltransferase 7 family. Interacts with SLC35A2 (isoform 2; UGT1). It depends on Mn(2+) as a cofactor. In terms of processing, N-glycosylated. In terms of tissue distribution, highest expression is observed in placenta, pancreas, kidney and heart. Expressed in corneal epithelial cells.

Its subcellular location is the golgi apparatus membrane. It is found in the secreted. It catalyses the reaction N-acetyl-D-glucosamine + UDP-alpha-D-galactose = beta-D-galactosyl-(1-&gt;4)-N-acetyl-D-glucosamine + UDP + H(+). It carries out the reaction a beta-D-GlcNAc-(1-&gt;3)-beta-D-Gal-(1-&gt;4)-beta-D-Glc-(1&lt;-&gt;1)-Cer(d18:1(4E)) + UDP-alpha-D-galactose = a neolactoside nLc4Cer(d18:1(4E)) + UDP + H(+). The enzyme catalyses 3-O-{beta-D-galactosyl-(1-&gt;3)-[6-O-sulfo-N-acetyl-beta-D-glucosaminyl-(1-&gt;6)]-N-acetyl-alpha-D-galactosaminyl}-L-seryl-[protein] + UDP-alpha-D-galactose = 3-O-{beta-D-galactosyl-(1-&gt;3)-[beta-D-galactosyl-(1-&gt;4)-6-O-sulfo-N-acetyl-beta-D-glucosaminyl-(1-&gt;6)]-N-acetyl-alpha-D-galactosaminyl}-L-seryl-[protein] + UDP + H(+). The catalysed reaction is 3-O-{beta-D-galactosyl-(1-&gt;3)-[6-O-sulfo-N-acetyl-beta-D-glucosaminyl-(1-&gt;6)]-N-acetyl-alpha-D-galactosaminyl}-L-threonyl-[protein] + UDP-alpha-D-galactose = 3-O-{beta-D-galactosyl-(1-&gt;3)-[beta-D-galactosyl-(1-&gt;4)-6-O-sulfo-N-acetyl-beta-D-glucosaminyl-(1-&gt;6)]-N-acetyl-alpha-D-galactosaminyl}-L-threonyl-[protein] + UDP + H(+). Its pathway is protein modification; protein glycosylation. It participates in glycolipid biosynthesis. Up-regulated by LALBA. Functionally, galactose (Gal) transferase involved in the synthesis of terminal N-acetyllactosamine (LacNac) unit present on glycan chains of glycoproteins and glycosphingolipids. Catalyzes the transfer of Gal residue via a beta1-&gt;4 linkage from UDP-Gal to the non-reducing terminal N-acetyl glucosamine 6-O-sulfate (6-O-sulfoGlcNAc) in the linearly growing chain of both N- and O-linked keratan sulfate proteoglycans. Cooperates with B3GNT7 N-acetyl glucosamine transferase and CHST6 and CHST1 sulfotransferases to construct and elongate mono- and disulfated disaccharide units [-&gt;3Galbeta1-&gt;4(6-sulfoGlcNAcbeta)1-&gt;] and [-&gt;3(6-sulfoGalbeta)1-&gt;4(6-sulfoGlcNAcbeta)1-&gt;] within keratan sulfate polymer. Transfers Gal residue via a beta1-&gt;4 linkage to terminal 6-O-sulfoGlcNAc within the LacNac unit of core 2 O-glycans forming 6-sulfo-sialyl-Lewis X (sLex). May contribute to the generation of sLex epitope on mucin-type glycoproteins that serve as ligands for SELL/L-selectin, a major regulator of leukocyte migration. In the biosynthesis pathway of neolacto-series glycosphingolipids, transfers Gal residue via a beta1-&gt;4 linkage to terminal GlcNAc of a lactotriaosylceramide (Lc3Cer) acceptor to form a neolactotetraosylceramide. The chain is Beta-1,4-galactosyltransferase 4 from Homo sapiens (Human).